Here is a 336-residue protein sequence, read N- to C-terminus: Dihydroorotate dehydrogenase (quinone) (336 aa).

FMN is bound by residues 62–66 (AGLDK) and T86. K66 is a substrate binding site. 111-115 (NRMGF) contacts substrate. 2 residues coordinate FMN: N139 and N172. Residue N172 participates in substrate binding. S175 serves as the catalytic Nucleophile. N177 contributes to the substrate binding site. Positions 217 and 245 each coordinate FMN. 246 to 247 (NT) contributes to the substrate binding site. FMN-binding positions include G268, G297, and 318–319 (YS).

The protein belongs to the dihydroorotate dehydrogenase family. Type 2 subfamily. Monomer. Requires FMN as cofactor.

The protein localises to the cell membrane. The catalysed reaction is (S)-dihydroorotate + a quinone = orotate + a quinol. It functions in the pathway pyrimidine metabolism; UMP biosynthesis via de novo pathway; orotate from (S)-dihydroorotate (quinone route): step 1/1. Catalyzes the conversion of dihydroorotate to orotate with quinone as electron acceptor. This chain is Dihydroorotate dehydrogenase (quinone), found in Klebsiella pneumoniae (strain 342).